The sequence spans 351 residues: UDP-3-O-acylglucosamine N-acyltransferase (351 aa).

Catalysis depends on histidine 240, which acts as the Proton acceptor.

This sequence belongs to the transferase hexapeptide repeat family. LpxD subfamily. Homotrimer.

The catalysed reaction is a UDP-3-O-[(3R)-3-hydroxyacyl]-alpha-D-glucosamine + a (3R)-hydroxyacyl-[ACP] = a UDP-2-N,3-O-bis[(3R)-3-hydroxyacyl]-alpha-D-glucosamine + holo-[ACP] + H(+). Its pathway is bacterial outer membrane biogenesis; LPS lipid A biosynthesis. In terms of biological role, catalyzes the N-acylation of UDP-3-O-acylglucosamine using 3-hydroxyacyl-ACP as the acyl donor. Is involved in the biosynthesis of lipid A, a phosphorylated glycolipid that anchors the lipopolysaccharide to the outer membrane of the cell. In Pseudomonas entomophila (strain L48), this protein is UDP-3-O-acylglucosamine N-acyltransferase.